Here is a 345-residue protein sequence, read N- to C-terminus: 4-hydroxyproline 2-epimerase 1 (345 aa).

Glutamine 85 contacts substrate. Catalysis depends on serine 93, which acts as the Proton acceptor. Residues 94–95 (GS) and aspartate 251 contribute to the substrate site. The active-site Proton donor is cysteine 255. Residue 256-257 (GT) coordinates substrate.

Belongs to the proline racemase family.

The enzyme catalyses trans-4-hydroxy-L-proline = cis-4-hydroxy-D-proline. Functionally, catalyzes the epimerization of trans-4-hydroxy-L-proline (t4LHyp) to cis-4-hydroxy-D-proline (c4DHyp). May be involved in a degradation pathway of t4LHyp. Can also catalyze the epimerization of trans-3-hydroxy-L-proline (t3LHyp) to cis-3-hydroxy-D-proline (c3DHyp) in vitro. Displays no proline racemase activity. This Rhizobium rhizogenes (strain K84 / ATCC BAA-868) (Agrobacterium radiobacter) protein is 4-hydroxyproline 2-epimerase 1.